Reading from the N-terminus, the 136-residue chain is Large ribosomal subunit protein uL16 (136 aa).

It belongs to the universal ribosomal protein uL16 family. Part of the 50S ribosomal subunit.

In terms of biological role, binds 23S rRNA and is also seen to make contacts with the A and possibly P site tRNAs. The protein is Large ribosomal subunit protein uL16 of Actinobacillus succinogenes (strain ATCC 55618 / DSM 22257 / CCUG 43843 / 130Z).